A 102-amino-acid polypeptide reads, in one-letter code: Large ribosomal subunit protein uL24 (102 aa).

This sequence belongs to the universal ribosomal protein uL24 family. Part of the 50S ribosomal subunit.

In terms of biological role, one of two assembly initiator proteins, it binds directly to the 5'-end of the 23S rRNA, where it nucleates assembly of the 50S subunit. Its function is as follows. One of the proteins that surrounds the polypeptide exit tunnel on the outside of the subunit. The polypeptide is Large ribosomal subunit protein uL24 (Rhizobium leguminosarum bv. trifolii (strain WSM2304)).